The following is a 238-amino-acid chain: Small ribosomal subunit protein uS3 (238 aa).

A KH type-2 domain is found at 39 to 107; sequence MREFIHDYAK…ELHLNIVEIR (69 aa). The segment covering 212–222 has biased composition (basic and acidic residues); that stretch reads PQAHDRRHSEA. The tract at residues 212–238 is disordered; the sequence is PQAHDRRHSEAQEGAAPRPPRRDRERA.

It belongs to the universal ribosomal protein uS3 family. Part of the 30S ribosomal subunit. Forms a tight complex with proteins S10 and S14.

Its function is as follows. Binds the lower part of the 30S subunit head. Binds mRNA in the 70S ribosome, positioning it for translation. The protein is Small ribosomal subunit protein uS3 of Cereibacter sphaeroides (strain ATCC 17025 / ATH 2.4.3) (Rhodobacter sphaeroides).